A 944-amino-acid polypeptide reads, in one-letter code: Protein unc-45 homolog A (944 aa).

Residues 1–25 (MTVSGPGTPEPRPSDPGASSAEELR) are disordered. TPR repeat units lie at residues 21–54 (AEEL…GATP), 58–91 (AILH…DGGD), and 92–125 (VKAL…EPKN). Lysine 70 is modified (N6-acetyllysine). An N6-acetyllysine modification is found at lysine 483.

Interacts with PGR isoforms A and B as well as with NR3C1 in the absence of ligand, and with HSP90AB1. Binding to HSP90AB1 involves 2 UNC45A monomers per HSP90AB1 dimer.

The protein resides in the cytoplasm. Its subcellular location is the perinuclear region. The protein localises to the nucleus. May act as co-chaperone for HSP90 (Potential). Prevents the stimulation of HSP90AB1 ATPase activity by AHSA1. Positive factor in promoting PGR function in the cell. May be necessary for proper folding of myosin (Potential). Necessary for normal cell proliferation. Necessary for normal myotube formation and myosin accumulation during muscle cell development. May play a role in erythropoiesis in stroma cells in the spleen. In Rattus norvegicus (Rat), this protein is Protein unc-45 homolog A (Unc45a).